A 471-amino-acid polypeptide reads, in one-letter code: Cytolysin (471 aa).

The first 20 residues, 1 to 20, serve as a signal peptide directing secretion; it reads MKKMTLFTLSLLATAVQVGA. The 128-residue stretch at 338 to 465 folds into the Ricin B-type lectin domain; the sequence is AHVTLQSLSN…EANQARWKPT (128 aa).

This sequence belongs to the HlyA hemolysin family.

In terms of biological role, bacterial hemolysins are exotoxins that attack blood cell membranes and cause cell rupture by mechanisms not clearly defined. This Vibrio vulnificus (strain CMCP6) protein is Cytolysin (vvhA).